The sequence spans 187 residues: Shikimate kinase (187 aa).

14–19 serves as a coordination point for ATP; it reads TSGKST. S18 is a binding site for Mg(2+). The substrate site is built by D36, R60, and G82. R120 is an ATP binding site. R147 provides a ligand contact to substrate.

This sequence belongs to the shikimate kinase family. Monomer. Mg(2+) is required as a cofactor.

The protein resides in the cytoplasm. The enzyme catalyses shikimate + ATP = 3-phosphoshikimate + ADP + H(+). It functions in the pathway metabolic intermediate biosynthesis; chorismate biosynthesis; chorismate from D-erythrose 4-phosphate and phosphoenolpyruvate: step 5/7. Functionally, catalyzes the specific phosphorylation of the 3-hydroxyl group of shikimic acid using ATP as a cosubstrate. This chain is Shikimate kinase, found in Chloroherpeton thalassium (strain ATCC 35110 / GB-78).